Reading from the N-terminus, the 734-residue chain is MNYITSLLLLSSNTFLHPTTTYLQSMNDSIVLVTSSVSTELTTLGYDPISTISGVNGTNNIDYIKLLNDTNSTFVQLDNSDTDIDDSSSNSEDVSSNDEQIALMNSSSDFSDESDEGNDSDDNGDEVENMENNQANESDTQNENDRVLNYDTSSSENENENENENENQLEQEHQHYYYKNRSKFYNHFLRYPEVVINNNDDRAELASTKNNLLVRSPKSNNRRLIGSSRKKTLKSKSKSKSSKLKHKSRKSHKRRPKLLKSKDVETNEITTVEVITLTITKVLARHDLAAIVTPIQQHQSGHLIIGYPLPIATKSRLHGYYKSSGVLKEVDANPTEEYDSGDGKENTQQNPIPEKMRLPTNDDPYSLKPTHHYDPSATMQNPHKQFTNRTGNFEIPTNVQDIDDITFPIDLSSSDSTSNLYSILPMNQTNLPDVNTLSLAPGTGSVPPRYSNHHSEFTVERPPRPSRTKKRPRIKAKKTMKVSTQISSAMSKSIHITRIGSTSSGIASGITNIVIPNSSSSIYDNYQDSSSDKQPVSLSMPTKTITMTTDTTSEPVTITEKLDKPKFPDIFTIIRSKLLSKKPQETKLHSPTSTDTKSSKLMSSSSSNNNKPEISKTTKEYNQTQESTSYNTTKAVPKTSVVSSTTSTKPNDQGNNILNSFIQFTETIHSRIRFPTADDNNNNAGNNYHRRFTGVVLPENRQFVFRSASQNLSFSVLGLIILLLLLPGLLIIIM.

Positions 1-16 are cleaved as a signal peptide; that stretch reads MNYITSLLLLSSNTFL. Asn-27, Asn-56, Asn-68, and Asn-71 each carry an N-linked (GlcNAc...) asparagine glycan. The interval 78–145 is disordered; it reads DNSDTDIDDS…NESDTQNEND (68 aa). The segment covering 87-98 has biased composition (low complexity); sequence SSSNSEDVSSND. 4 N-linked (GlcNAc...) asparagine glycosylation sites follow: Asn-105, Asn-118, Asn-136, and Asn-180. A compositionally biased stretch (acidic residues) spans 110-129; that stretch reads FSDESDEGNDSDDNGDEVEN. A compositionally biased stretch (polar residues) spans 130–141; it reads MENNQANESDTQ. Disordered stretches follow at residues 216–262 and 331–360; these read SPKS…LKSK and DANP…RLPT. The segment covering 228–259 has biased composition (basic residues); it reads SRKKTLKSKSKSKSSKLKHKSRKSHKRRPKLL. 2 N-linked (GlcNAc...) asparagine glycosylation sites follow: Asn-388 and Asn-427. Residues 447–479 are disordered; sequence PPRYSNHHSEFTVERPPRPSRTKKRPRIKAKKT. Residues 453-463 show a composition bias toward basic and acidic residues; that stretch reads HHSEFTVERPP. The span at 464–479 shows a compositional bias: basic residues; that stretch reads RPSRTKKRPRIKAKKT. The N-linked (GlcNAc...) asparagine glycan is linked to Asn-517. The segment at 582-653 is disordered; the sequence is KPQETKLHSP…STTSTKPNDQ (72 aa). Positions 592–611 are enriched in low complexity; sequence TSTDTKSSKLMSSSSSNNNK. Positions 620-631 are enriched in polar residues; that stretch reads EYNQTQESTSYN. Residues Asn-622 and Asn-631 are each glycosylated (N-linked (GlcNAc...) asparagine). A compositionally biased stretch (low complexity) spans 632 to 650; sequence TTKAVPKTSVVSSTTSTKP. Ser-707 carries the GPI-anchor amidated serine lipid modification. Positions 708 to 734 are cleaved as a propeptide — removed in mature form; the sequence is ASQNLSFSVLGLIILLLLLPGLLIIIM. N-linked (GlcNAc...) asparagine glycosylation occurs at Asn-711.

It localises to the cell membrane. This is Predicted GPI-anchored protein 49 (PGA49) from Candida albicans (strain SC5314 / ATCC MYA-2876) (Yeast).